Here is a 127-residue protein sequence, read N- to C-terminus: Small ribosomal subunit protein uS11 (127 aa).

The protein belongs to the universal ribosomal protein uS11 family. As to quaternary structure, part of the 30S ribosomal subunit. Interacts with proteins S7 and S18. Binds to IF-3.

Functionally, located on the platform of the 30S subunit, it bridges several disparate RNA helices of the 16S rRNA. Forms part of the Shine-Dalgarno cleft in the 70S ribosome. This chain is Small ribosomal subunit protein uS11, found in Rhodopirellula baltica (strain DSM 10527 / NCIMB 13988 / SH1).